Consider the following 94-residue polypeptide: MLQSNEYFSGKVKSIGFTSSSTGRASVGVMAEGEYTFGTAEPEEMTVVSGALKVLLPGTVEWKVYTAGEVFNVPGHSEFHLQVAEPASYLCRYL.

It belongs to the nucleoside phosphorylase PpnP family.

The catalysed reaction is a purine D-ribonucleoside + phosphate = a purine nucleobase + alpha-D-ribose 1-phosphate. It catalyses the reaction adenosine + phosphate = alpha-D-ribose 1-phosphate + adenine. It carries out the reaction cytidine + phosphate = cytosine + alpha-D-ribose 1-phosphate. The enzyme catalyses guanosine + phosphate = alpha-D-ribose 1-phosphate + guanine. The catalysed reaction is inosine + phosphate = alpha-D-ribose 1-phosphate + hypoxanthine. It catalyses the reaction thymidine + phosphate = 2-deoxy-alpha-D-ribose 1-phosphate + thymine. It carries out the reaction uridine + phosphate = alpha-D-ribose 1-phosphate + uracil. The enzyme catalyses xanthosine + phosphate = alpha-D-ribose 1-phosphate + xanthine. Its function is as follows. Catalyzes the phosphorolysis of diverse nucleosides, yielding D-ribose 1-phosphate and the respective free bases. Can use uridine, adenosine, guanosine, cytidine, thymidine, inosine and xanthosine as substrates. Also catalyzes the reverse reactions. The protein is Pyrimidine/purine nucleoside phosphorylase of Salmonella typhimurium (strain LT2 / SGSC1412 / ATCC 700720).